The chain runs to 1116 residues: Eukaryotic translation initiation factor 2-alpha kinase 3 (1116 aa).

A signal peptide spans 1 to 29 (MERAISPGLLVRALLLLLLLLGLAARTVA). Residues 30-514 (AGRARGLPAP…HYNKNIRKKD (485 aa)) lie on the Lumenal side of the membrane. Positions 77–101 (ALPAAAGEQEPRGPEPDDETELRPR) are disordered. Residue asparagine 258 is glycosylated (N-linked (GlcNAc...) asparagine). Residues 515 to 535 (PVLLLHWWKEIVATILFCIIA) traverse the membrane as a helical segment. Over 536–1116 (TTFIVRRLFH…NNSHSPLPSN (581 aa)) the chain is Cytoplasmic. The interval 550–571 (RQRKESETQCQTENKYDSVSGE) is disordered. One can recognise a Protein kinase domain in the interval 593–1077 (FEPIQCLGRG…AINIIENAVF (485 aa)). 599 to 607 (LGRGGFGVV) contributes to the ATP binding site. Tyrosine 619 carries the post-translational modification Phosphotyrosine; by autocatalysis. Lysine 622 contacts ATP. The interval 647–888 (EHPGIVRYFN…SPKVYLYIQM (242 aa)) is insert loop. Serine 715 carries the phosphoserine modification. Threonine 802 bears the Phosphothreonine mark. Residues 841–863 (KPTSSKSSSEATLSISPPRPTTL) are disordered. Residues 844–856 (SSKSSSEATLSIS) are compositionally biased toward low complexity. The Proton acceptor role is filled by aspartate 937. The residue at position 982 (threonine 982) is a Phosphothreonine. Positions 1090-1116 (QRSRSLSSSGTKHSRQSNNSHSPLPSN) are disordered. Serine 1094 is modified (phosphoserine). Polar residues predominate over residues 1105–1116 (QSNNSHSPLPSN).

The protein belongs to the protein kinase superfamily. Ser/Thr protein kinase family. GCN2 subfamily. In terms of assembly, forms dimers with HSPA5/BIP in resting cells. Homotetramerizes in response to endoplasmic reticulum (ER) stress, leading to its activation. Interacts with HSP90B1/GRP94. Interacts with DNAJC3; inhibiting EIF2AK3/PERK activity. Interacts with ATAD3A; ATAD3A and EIF2S1/eIF-2-alpha occupy a common binding site within the cytoplasmic loop of EIF2AK3/PERK, leading to prevent EIF2AK3/PERK association with its substrate EIF2S1/eIF-2-alpha. Interacts with MFN2. Interacts with TMEM33. Interacts with PDIA6. Interacts with LACC1. In terms of processing, oligomerization of the N-terminal ER luminal domain by ER stress promotes EIF2AK3/PERK trans-autophosphorylation of the C-terminal cytoplasmic kinase domain at multiple residues including Thr-982 on the kinase activation loop. Autophosphorylated at Tyr-619 following endoplasmic reticulum stress, leading to activate its activity. Dephosphorylated at Tyr-619 by PTPN1/PTP1B, leading to inactivate its enzyme activity. Phosphorylation at Thr-802 by AKT (AKT1, AKT2 and/or AKT3) inactivates EIF2AK3/PERK. ADP-ribosylated by PARP16 upon ER stress, which increases kinase activity. Ubiquitous. A high level expression is seen in secretory tissues.

It localises to the endoplasmic reticulum membrane. The enzyme catalyses L-seryl-[protein] + ATP = O-phospho-L-seryl-[protein] + ADP + H(+). It catalyses the reaction L-threonyl-[protein] + ATP = O-phospho-L-threonyl-[protein] + ADP + H(+). The catalysed reaction is L-tyrosyl-[protein] + ATP = O-phospho-L-tyrosyl-[protein] + ADP + H(+). Inhibited by HSPA5/BIP in absence of stress. Perturbation in protein folding in the endoplasmic reticulum (ER) promotes reversible dissociation from HSPA5/BIP and oligomerization, resulting in trans-autophosphorylation and kinase activity induction. Inactivated following phosphorylation at Thr-802 by AKT (AKT1, AKT2 and/or AKT3). Inhibited by ATAD3A at mitochondria-endoplasmic reticulum contact sites, providing a safe haven for mitochondrial protein translation during ER stress. Its function is as follows. Metabolic-stress sensing protein kinase that phosphorylates the alpha subunit of eukaryotic translation initiation factor 2 (EIF2S1/eIF-2-alpha) in response to various stress, such as unfolded protein response (UPR). Key effector of the integrated stress response (ISR) to unfolded proteins: EIF2AK3/PERK specifically recognizes and binds misfolded proteins, leading to its activation and EIF2S1/eIF-2-alpha phosphorylation. EIF2S1/eIF-2-alpha phosphorylation in response to stress converts EIF2S1/eIF-2-alpha in a global protein synthesis inhibitor, leading to a global attenuation of cap-dependent translation, while concomitantly initiating the preferential translation of ISR-specific mRNAs, such as the transcriptional activators ATF4 and QRICH1, and hence allowing ATF4- and QRICH1-mediated reprogramming. The EIF2AK3/PERK-mediated unfolded protein response increases mitochondrial oxidative phosphorylation by promoting ATF4-mediated expression of COX7A2L/SCAF1, thereby increasing formation of respiratory chain supercomplexes. In contrast to most subcellular compartments, mitochondria are protected from the EIF2AK3/PERK-mediated unfolded protein response due to EIF2AK3/PERK inhibition by ATAD3A at mitochondria-endoplasmic reticulum contact sites. In addition to EIF2S1/eIF-2-alpha, also phosphorylates NFE2L2/NRF2 in response to stress, promoting release of NFE2L2/NRF2 from the BCR(KEAP1) complex, leading to nuclear accumulation and activation of NFE2L2/NRF2. Serves as a critical effector of unfolded protein response (UPR)-induced G1 growth arrest due to the loss of cyclin-D1 (CCND1). Involved in control of mitochondrial morphology and function. This chain is Eukaryotic translation initiation factor 2-alpha kinase 3, found in Homo sapiens (Human).